A 284-amino-acid chain; its full sequence is Release factor glutamine methyltransferase (284 aa).

S-adenosyl-L-methionine is bound by residues 121-125, Asp144, Trp172, and Asn188; that span reads GTGTG. Position 188–191 (188–191) interacts with substrate; the sequence is NPPY.

Belongs to the protein N5-glutamine methyltransferase family. PrmC subfamily.

It carries out the reaction L-glutaminyl-[peptide chain release factor] + S-adenosyl-L-methionine = N(5)-methyl-L-glutaminyl-[peptide chain release factor] + S-adenosyl-L-homocysteine + H(+). Methylates the class 1 translation termination release factors RF1/PrfA and RF2/PrfB on the glutamine residue of the universally conserved GGQ motif. This is Release factor glutamine methyltransferase from Aliivibrio fischeri (strain ATCC 700601 / ES114) (Vibrio fischeri).